Here is a 446-residue protein sequence, read N- to C-terminus: Alkylglycerol monooxygenase (446 aa).

Helical transmembrane passes span 43-63 (ATVYFFIMLILEMIISWAWKG) and 110-130 (WDSPWTWWLTFLGVDFGYYWF). Residues 118 to 248 (LTFLGVDFGY…LIIWDRMFGT (131 aa)) form the Fatty acid hydroxylase domain. The Histidine box-1 motif lies at 131-135 (HRMAH). Residues 144–148 (HQTHH) carry the Histidine box-2 motif. Residues 167-187 (YFSWMFYWPMAFCIPPSVFAV) traverse the membrane as a helical segment. Positions 220–224 (HRVHH) match the Histidine box-3 motif. Transmembrane regions (helical) follow at residues 339-359 (MMHFLLLLAVYVHMFEAKLIL), 362-382 (ATLLLRIGYILLTLTSLGFIF), and 412-434 (VPYLRIINEVTFSICTAAWGLKA).

Belongs to the sterol desaturase family. TMEM195 subfamily. The cofactor is Fe cation.

Its subcellular location is the endoplasmic reticulum membrane. It catalyses the reaction 1-O-(1,2-saturated-alkyl)-sn-glycerol + (6R)-L-erythro-5,6,7,8-tetrahydrobiopterin + O2 = a 1-(1-hydroxyalkyl)-sn-glycerol + (6R)-L-erythro-6,7-dihydrobiopterin + H2O. Functionally, glyceryl-ether monooxygenase that cleaves the O-alkyl bond of ether lipids. Ether lipids are essential components of brain membranes. The chain is Alkylglycerol monooxygenase (agmo) from Xenopus tropicalis (Western clawed frog).